A 408-amino-acid chain; its full sequence is CST complex subunit STN1 (408 aa).

The interaction with CTC1 stretch occupies residues 8-195; that stretch reads MQCESSPKEE…KVYDQPFRNP (188 aa). Residues 64 to 165 constitute a DNA-binding region (OB); the sequence is VDIMGAVISV…EICATIYYKV (102 aa). Winged helix-turn-helix (wHTH) stretches follow at residues 201 to 304 and 305 to 408; these read EALN…YVTS and KDKD…YTAF.

The protein belongs to the STN1 family. As to quaternary structure, component of the CST complex, composed of TEN1/C17orf106, CTC1/C17orf68 and STN1; in the complex interacts directly with TEN1 and CTC1. Interacts with ACD/TPP1, POT1 and POLA1.

Its subcellular location is the nucleus. The protein resides in the chromosome. It is found in the telomere. Its function is as follows. Component of the CST complex proposed to act as a specialized replication factor promoting DNA replication under conditions of replication stress or natural replication barriers such as the telomere duplex. The CST complex binds single-stranded DNA with high affinity in a sequence-independent manner, while isolated subunits bind DNA with low affinity by themselves. Initially the CST complex has been proposed to protect telomeres from DNA degradation. However, the CST complex has been shown to be involved in several aspects of telomere replication. The CST complex inhibits telomerase and is involved in telomere length homeostasis; it is proposed to bind to newly telomerase-synthesized 3' overhangs and to terminate telomerase action implicating the association with the ACD:POT1 complex thus interfering with its telomerase stimulation activity. The CST complex is also proposed to be involved in fill-in synthesis of the telomeric C-strand probably implicating recruitment and activation of DNA polymerase alpha. The CST complex facilitates recovery from many forms of exogenous DNA damage; seems to be involved in the re-initiation of DNA replication at repaired forks and/or dormant origins. Required for efficicient replication of the duplex region of the telomere. Promotes efficient replication of lagging-strand telomeres. Promotes general replication start following replication-fork stalling implicating new origin firing. May be in involved in C-strand fill-in during late S/G2 phase independent of its role in telomere duplex replication. The sequence is that of CST complex subunit STN1 from Rattus norvegicus (Rat).